A 476-amino-acid chain; its full sequence is Ribosomal RNA small subunit methyltransferase F (476 aa).

Residues 125–131 (AAAPGSK), Glu-149, Asp-176, and Asp-194 contribute to the S-adenosyl-L-methionine site. The Nucleophile role is filled by Cys-247.

Belongs to the class I-like SAM-binding methyltransferase superfamily. RsmB/NOP family.

The protein localises to the cytoplasm. The catalysed reaction is cytidine(1407) in 16S rRNA + S-adenosyl-L-methionine = 5-methylcytidine(1407) in 16S rRNA + S-adenosyl-L-homocysteine + H(+). Specifically methylates the cytosine at position 1407 (m5C1407) of 16S rRNA. In Aeromonas salmonicida (strain A449), this protein is Ribosomal RNA small subunit methyltransferase F.